Here is a 334-residue protein sequence, read N- to C-terminus: Glyceraldehyde-3-phosphate dehydrogenase 1 (334 aa).

NAD(+) contacts are provided by residues 11 to 12 (RI), Asp-33, Arg-77, and Ser-119. D-glyceraldehyde 3-phosphate contacts are provided by residues 150-152 (SCT) and Thr-181. Cys-151 acts as the Nucleophile in catalysis. Asn-182 provides a ligand contact to NAD(+). Residues Arg-196, 209–210 (TG), and Arg-232 each bind D-glyceraldehyde 3-phosphate. Asn-314 contributes to the NAD(+) binding site.

Belongs to the glyceraldehyde-3-phosphate dehydrogenase family. Homotetramer.

It is found in the cytoplasm. The catalysed reaction is D-glyceraldehyde 3-phosphate + phosphate + NAD(+) = (2R)-3-phospho-glyceroyl phosphate + NADH + H(+). It functions in the pathway carbohydrate degradation; glycolysis; pyruvate from D-glyceraldehyde 3-phosphate: step 1/5. Its function is as follows. Catalyzes the oxidative phosphorylation of glyceraldehyde 3-phosphate (G3P) to 1,3-bisphosphoglycerate (BPG) using the cofactor NAD. The first reaction step involves the formation of a hemiacetal intermediate between G3P and a cysteine residue, and this hemiacetal intermediate is then oxidized to a thioester, with concomitant reduction of NAD to NADH. The reduced NADH is then exchanged with the second NAD, and the thioester is attacked by a nucleophilic inorganic phosphate to produce BPG. The sequence is that of Glyceraldehyde-3-phosphate dehydrogenase 1 (gap1) from Bacillus cereus.